Here is a 431-residue protein sequence, read N- to C-terminus: tRNA(Ile)-lysidine synthase (431 aa).

ATP is bound at residue 25–30 (SGGLDS).

It belongs to the tRNA(Ile)-lysidine synthase family.

The protein localises to the cytoplasm. It catalyses the reaction cytidine(34) in tRNA(Ile2) + L-lysine + ATP = lysidine(34) in tRNA(Ile2) + AMP + diphosphate + H(+). In terms of biological role, ligates lysine onto the cytidine present at position 34 of the AUA codon-specific tRNA(Ile) that contains the anticodon CAU, in an ATP-dependent manner. Cytidine is converted to lysidine, thus changing the amino acid specificity of the tRNA from methionine to isoleucine. This Legionella pneumophila (strain Paris) protein is tRNA(Ile)-lysidine synthase.